The chain runs to 153 residues: Regulatory protein RecX (153 aa).

The protein belongs to the RecX family.

It is found in the cytoplasm. Modulates RecA activity. The sequence is that of Regulatory protein RecX from Pseudomonas aeruginosa (strain UCBPP-PA14).